Here is an 837-residue protein sequence, read N- to C-terminus: Tuftelin-interacting protein 11 (837 aa).

Composition is skewed to basic and acidic residues over residues 1-13 (MSLS…GEGR) and 53-64 (VWAERDSDDERP). Disordered regions lie at residues 1 to 21 (MSLS…DDER), 53 to 72 (VWAE…KRAR), and 85 to 133 (LKKG…KGFA). The tract at residues 1-50 (MSLSHLYRDGEGRIDDDDDERENFEITDWDLQNEFNPNRQRHWQTKEEAT) is required for interaction with DHX15. Phosphoserine occurs at positions 2, 59, and 98. The span at 91–102 (EEAELEDSDDEE) shows a compositional bias: acidic residues. Basic and acidic residues predominate over residues 103 to 116 (KPVKQDDFPKDFGP). The residue at position 144 (serine 144) is a Phosphoserine. In terms of domain architecture, G-patch spans 149–195 (TKGIGQKLLQKMGYVPGRGLGKNAQGIINPIEAKQRKGKGAVGAYGS). Positions 179 to 236 (IEAKQRKGKGAVGAYGSERTTQSMQDFPVVDSEEEAEEEFQKELSQWRKDPSGSKKKP) are disordered. Residue serine 210 is modified to Phosphoserine. Residues 217-231 (EFQKELSQWRKDPSG) show a composition bias toward basic and acidic residues. A Nuclear localization signal motif is present at residues 700–705 (VKDKFN). The interval 710 to 734 (IMNRAVSSNVGAYMQPGARENIAYL) is required for nuclear speckle localization.

Belongs to the TFP11/STIP family. As to quaternary structure, identified in the spliceosome C complex. Found in the Intron Large (IL) complex, a post-mRNA release spliceosomal complex containing the excised intron, U2, U5 and U6 snRNPs, and splicing factors. Interacts with TUFT1. Interacts with DHX15; indicative for a recruitment of DHX15 to the IL complex. Interacts with GCFC2.

The protein resides in the cytoplasm. The protein localises to the nucleus. Functionally, involved in pre-mRNA splicing, specifically in spliceosome disassembly during late-stage splicing events. Intron turnover seems to proceed through reactions in two lariat-intron associated complexes termed Intron Large (IL) and Intron Small (IS). In cooperation with DHX15 seems to mediate the transition of the U2, U5 and U6 snRNP-containing IL complex to the snRNP-free IS complex leading to efficient debranching and turnover of excised introns. May play a role in the differentiation of ameloblasts and odontoblasts or in the forming of the enamel extracellular matrix. The polypeptide is Tuftelin-interacting protein 11 (TFIP11) (Homo sapiens (Human)).